A 162-amino-acid polypeptide reads, in one-letter code: MIFYTVLVLMFLGSTLVFYSLSPYYGALGLVLVALSGCLLCSLLGFSFIALVLILIYVGGMLVVFVYSTAISAERYPSVSNFNEILVLSSLVISWGVLNFDPLINVEVNSWGFVTNSDLVGASNLYSSMGGYLLIGGYILLVALVVALVLTYGSDYSILKAL.

A run of 4 helical transmembrane segments spans residues 1 to 21 (MIFY…FYSL), 46 to 66 (FSFI…VVFV), 84 to 104 (EILV…DPLI), and 130 to 150 (GGYL…ALVL).

This sequence belongs to the complex I subunit 6 family.

It is found in the mitochondrion membrane. It carries out the reaction a ubiquinone + NADH + 5 H(+)(in) = a ubiquinol + NAD(+) + 4 H(+)(out). Its function is as follows. Core subunit of the mitochondrial membrane respiratory chain NADH dehydrogenase (Complex I) that is believed to belong to the minimal assembly required for catalysis. Complex I functions in the transfer of electrons from NADH to the respiratory chain. The immediate electron acceptor for the enzyme is believed to be ubiquinone. The protein is NADH-ubiquinone oxidoreductase chain 6 (ND6) of Patiria pectinifera (Starfish).